We begin with the raw amino-acid sequence, 379 residues long: Cytochrome b (379 aa).

The next 4 membrane-spanning stretches (helical) occupy residues 33 to 53, 77 to 98, 113 to 133, and 178 to 198; these read FGSLLGMCLMIQILTGLFLAM, WLIRYLHANGASMFFICLFIHV, WNIGIILFLMTMATAFVGYVL, and FFAFHFILPFIIAAFALVHLL. 2 residues coordinate heme b: His-83 and His-97. Heme b is bound by residues His-182 and His-196. Position 201 (His-201) interacts with a ubiquinone. 4 helical membrane-spanning segments follow: residues 226 to 246, 288 to 308, 320 to 340, and 347 to 367; these read TKDLLGIFLLLLVLMILALFF, LGGVLALILSILILAAFPLLN, VTQVIYWIFTANLLVLTWIGG, and FTMIGQIASITYLAIIIILMP.

Belongs to the cytochrome b family. The cytochrome bc1 complex contains 11 subunits: 3 respiratory subunits (MT-CYB, CYC1 and UQCRFS1), 2 core proteins (UQCRC1 and UQCRC2) and 6 low-molecular weight proteins (UQCRH/QCR6, UQCRB/QCR7, UQCRQ/QCR8, UQCR10/QCR9, UQCR11/QCR10 and a cleavage product of UQCRFS1). This cytochrome bc1 complex then forms a dimer. Requires heme b as cofactor.

The protein localises to the mitochondrion inner membrane. In terms of biological role, component of the ubiquinol-cytochrome c reductase complex (complex III or cytochrome b-c1 complex) that is part of the mitochondrial respiratory chain. The b-c1 complex mediates electron transfer from ubiquinol to cytochrome c. Contributes to the generation of a proton gradient across the mitochondrial membrane that is then used for ATP synthesis. The polypeptide is Cytochrome b (MT-CYB) (Akodon kofordi (Koford's grass mouse)).